The primary structure comprises 475 residues: Cytochrome c-552 (475 aa).

Residues 1–29 form the signal peptide; that stretch reads MSIKHWMSAPIAVATLFASQLLLAGSVLA. Residues 38-57 form a disordered region; the sequence is PRNDAFEQKHPDQYHSWKAT. Histidine 92 serves as a coordination point for heme c. Heme is bound by residues cysteine 120, cysteine 123, and lysine 124. Heme c-binding residues include cysteine 158, cysteine 161, histidine 162, cysteine 207, cysteine 210, and histidine 211. Ca(2+) contacts are provided by glutamate 213, tyrosine 214, lysine 259, and glutamine 261. A substrate-binding site is contributed by tyrosine 214. Histidine 262 provides a ligand contact to substrate. Heme c is bound by residues histidine 273, cysteine 280, cysteine 283, histidine 284, histidine 299, cysteine 312, cysteine 315, histidine 316, and histidine 391.

Belongs to the cytochrome c-552 family. Ca(2+) is required as a cofactor. Requires heme c as cofactor.

The protein localises to the periplasm. The enzyme catalyses 6 Fe(III)-[cytochrome c] + NH4(+) + 2 H2O = 6 Fe(II)-[cytochrome c] + nitrite + 8 H(+). Its pathway is nitrogen metabolism; nitrate reduction (assimilation). In terms of biological role, catalyzes the reduction of nitrite to ammonia, consuming six electrons in the process. The sequence is that of Cytochrome c-552 from Vibrio parahaemolyticus serotype O3:K6 (strain RIMD 2210633).